The following is a 750-amino-acid chain: uncharacterized protein (750 aa).

The next 3 membrane-spanning stretches (helical) occupy residues 1 to 21 (MSII…SIVT), 465 to 485 (YGAN…ISYL), and 586 to 606 (GMFG…VAVS).

The protein resides in the membrane. This is an uncharacterized protein from Saccharomyces cerevisiae (strain ATCC 204508 / S288c) (Baker's yeast).